The following is a 122-amino-acid chain: Large ribosomal subunit protein bL12 (122 aa).

Belongs to the bacterial ribosomal protein bL12 family. Homodimer. Part of the ribosomal stalk of the 50S ribosomal subunit. Forms a multimeric L10(L12)X complex, where L10 forms an elongated spine to which 2 to 4 L12 dimers bind in a sequential fashion. Binds GTP-bound translation factors.

Functionally, forms part of the ribosomal stalk which helps the ribosome interact with GTP-bound translation factors. Is thus essential for accurate translation. In Shewanella putrefaciens (strain CN-32 / ATCC BAA-453), this protein is Large ribosomal subunit protein bL12.